The chain runs to 105 residues: Vacuolar ATPase assembly integral membrane protein VMA21 homolog (105 aa).

A disordered region spans residues 1–26; that stretch reads MSTKNKKAAGGNGGAPKQTRQQSHDS. Topologically, residues 1 to 36 are cytoplasmic; that stretch reads MSTKNKKAAGGNGGAPKQTRQQSHDSQDYSSFKTVL. A helical transmembrane segment spans residues 37 to 57; it reads FYCMLIVFLPVLTFFVLKGFV. Residues 58 to 68 lie on the Lumenal side of the membrane; sequence LDQFLDISEVK. Residues 69-89 traverse the membrane as a helical segment; that stretch reads VNIASAVGAVVALHIALGLYI. At 90–105 the chain is on the cytoplasmic side; the sequence is YRAYFGTTGSKASKTD.

The protein belongs to the VMA21 family.

Its subcellular location is the endoplasmic reticulum membrane. The protein resides in the endoplasmic reticulum-Golgi intermediate compartment membrane. The protein localises to the cytoplasmic vesicle. It is found in the COPII-coated vesicle membrane. In terms of biological role, required for the assembly of the V0 complex of the vacuolar ATPase (V-ATPase) in the endoplasmic reticulum. The polypeptide is Vacuolar ATPase assembly integral membrane protein VMA21 homolog (Drosophila erecta (Fruit fly)).